A 217-amino-acid chain; its full sequence is tRNA (guanine-N(7)-)-methyltransferase (217 aa).

E48, E73, N100, and D123 together coordinate S-adenosyl-L-methionine. The active site involves D123. The substrate site is built by K127 and D159.

Belongs to the class I-like SAM-binding methyltransferase superfamily. TrmB family.

The enzyme catalyses guanosine(46) in tRNA + S-adenosyl-L-methionine = N(7)-methylguanosine(46) in tRNA + S-adenosyl-L-homocysteine. It participates in tRNA modification; N(7)-methylguanine-tRNA biosynthesis. Its function is as follows. Catalyzes the formation of N(7)-methylguanine at position 46 (m7G46) in tRNA. The chain is tRNA (guanine-N(7)-)-methyltransferase from Leptospira borgpetersenii serovar Hardjo-bovis (strain JB197).